Consider the following 89-residue polypeptide: Large ribosomal subunit protein eL34 (89 aa).

The protein belongs to the eukaryotic ribosomal protein eL34 family.

The protein is Large ribosomal subunit protein eL34 (rpl34e) of Methanocaldococcus jannaschii (strain ATCC 43067 / DSM 2661 / JAL-1 / JCM 10045 / NBRC 100440) (Methanococcus jannaschii).